The primary structure comprises 60 residues: Mastoparan-VB2 (60 aa).

Residues 1 to 27 (MKNTILLLFTAFIFLMGFFGMSADALA) form the signal peptide. AXPX repeat units follow at residues 27–30 (ADPK), 31–34 (ADPL), 35–38 (AGPF), and 41–44 (ADPD). Residues 28 to 45 (DPKADPLAGPFPDADPDP) constitute a propeptide that is removed on maturation. Leucine amide is present on leucine 59.

Belongs to the MCD family. Mastoparan subfamily. Expressed by the venom gland.

The protein resides in the secreted. The protein localises to the target cell membrane. In terms of biological role, antimicrobial peptide. Shows activity against both Gram-positive and -negative bacteria, as well against fungi. Also promotes moderate mast cell degranulation. Does not show hemolytic activity on rabbit and human erythrocytes. Its mast cell degranulation activity may be related to the activation of G-protein coupled receptors in mast cells as well as interaction with other proteins located in cell endosomal membranes in the mast cells. The polypeptide is Mastoparan-VB2 (Vespa bicolor (Black shield wasp)).